Reading from the N-terminus, the 432-residue chain is Asparagine--tRNA ligase 2 (432 aa).

Belongs to the class-II aminoacyl-tRNA synthetase family. As to quaternary structure, homodimer.

The protein localises to the cytoplasm. It catalyses the reaction tRNA(Asn) + L-asparagine + ATP = L-asparaginyl-tRNA(Asn) + AMP + diphosphate + H(+). The protein is Asparagine--tRNA ligase 2 (asnS2) of Lactiplantibacillus plantarum (strain ATCC BAA-793 / NCIMB 8826 / WCFS1) (Lactobacillus plantarum).